Reading from the N-terminus, the 148-residue chain is Cytochrome c-type biogenesis protein CcmE (148 aa).

Residues 1 to 7 (MKPRSKR) lie on the Cytoplasmic side of the membrane. A helical; Signal-anchor for type II membrane protein membrane pass occupies residues 8–28 (LLLVAGAVALLVGAVALVLNA). The Periplasmic portion of the chain corresponds to 29–148 (FQQNLVFFHT…AQKAAQTVQQ (120 aa)). Residues His123 and Tyr127 each coordinate heme.

Belongs to the CcmE/CycJ family.

The protein resides in the cell inner membrane. In terms of biological role, heme chaperone required for the biogenesis of c-type cytochromes. Transiently binds heme delivered by CcmC and transfers the heme to apo-cytochromes in a process facilitated by CcmF and CcmH. This is Cytochrome c-type biogenesis protein CcmE from Aromatoleum aromaticum (strain DSM 19018 / LMG 30748 / EbN1) (Azoarcus sp. (strain EbN1)).